Reading from the N-terminus, the 425-residue chain is Enolase (425 aa).

Glutamine 162 provides a ligand contact to (2R)-2-phosphoglycerate. The Proton donor role is filled by glutamate 204. The Mg(2+) site is built by aspartate 241, glutamate 284, and aspartate 311. Lysine 336, arginine 365, serine 366, and lysine 387 together coordinate (2R)-2-phosphoglycerate. The active-site Proton acceptor is lysine 336.

Belongs to the enolase family. Mg(2+) serves as cofactor.

Its subcellular location is the cytoplasm. It is found in the secreted. The protein resides in the cell surface. It catalyses the reaction (2R)-2-phosphoglycerate = phosphoenolpyruvate + H2O. The protein operates within carbohydrate degradation; glycolysis; pyruvate from D-glyceraldehyde 3-phosphate: step 4/5. Catalyzes the reversible conversion of 2-phosphoglycerate (2-PG) into phosphoenolpyruvate (PEP). It is essential for the degradation of carbohydrates via glycolysis. This Brucella abortus (strain S19) protein is Enolase.